The primary structure comprises 313 residues: Malate dehydrogenase (313 aa).

Residues 8–13 (GAGNVG) and Asp33 each bind NAD(+). 2 residues coordinate substrate: Arg83 and Arg89. NAD(+) is bound by residues Asn96 and 119 to 121 (ISN). Substrate is bound by residues Asn121 and Arg152. His176 serves as the catalytic Proton acceptor.

The protein belongs to the LDH/MDH superfamily. MDH type 3 family.

The catalysed reaction is (S)-malate + NAD(+) = oxaloacetate + NADH + H(+). Catalyzes the reversible oxidation of malate to oxaloacetate. The protein is Malate dehydrogenase of Bacteroides fragilis (strain ATCC 25285 / DSM 2151 / CCUG 4856 / JCM 11019 / LMG 10263 / NCTC 9343 / Onslow / VPI 2553 / EN-2).